The chain runs to 218 residues: Small ribosomal subunit protein uS3c (218 aa).

One can recognise a KH type-2 domain in the interval 47–118; it reads VQKNMRTSSG…KLNIAVTRIA (72 aa).

It belongs to the universal ribosomal protein uS3 family. Part of the 30S ribosomal subunit.

It is found in the plastid. The protein localises to the chloroplast. The protein is Small ribosomal subunit protein uS3c (rps3) of Nicotiana sylvestris (Wood tobacco).